A 375-amino-acid polypeptide reads, in one-letter code: 23S rRNA (uracil(747)-C(5))-methyltransferase RlmC (375 aa).

[4Fe-4S] cluster-binding residues include C3, C11, C14, and C87. S-adenosyl-L-methionine is bound by residues Q212, F241, E262, and N307. The Nucleophile role is filled by C334.

The protein belongs to the class I-like SAM-binding methyltransferase superfamily. RNA M5U methyltransferase family. RlmC subfamily.

The catalysed reaction is uridine(747) in 23S rRNA + S-adenosyl-L-methionine = 5-methyluridine(747) in 23S rRNA + S-adenosyl-L-homocysteine + H(+). Functionally, catalyzes the formation of 5-methyl-uridine at position 747 (m5U747) in 23S rRNA. The chain is 23S rRNA (uracil(747)-C(5))-methyltransferase RlmC from Enterobacter sp. (strain 638).